A 627-amino-acid polypeptide reads, in one-letter code: Spindle assembly abnormal protein 6 homolog (627 aa).

A PISA domain is found at 39 to 91; sequence VHRKDLVVRLTDDTDLYFLYNLIISEEDFQSLKVQQGLLIDFTSFPQKFIDLL. The stretch at 153 to 473 forms a coiled coil; that stretch reads LASCLSSVKE…SREVLKTNEN (321 aa). Disordered regions lie at residues 187 to 257 and 561 to 586; these read QTLS…LQTK and EVSP…SKYF. Residues 191–201 are compositionally biased toward basic and acidic residues; that stretch reads EKSRELDKLRS. The span at 202-213 shows a compositional bias: polar residues; the sequence is EWTSQTTSLSSR. Residues 214 to 226 show a composition bias toward basic and acidic residues; it reads HMQDLTAEREKAL. The segment covering 229 to 238 has biased composition (low complexity); it reads QSRLQQQNEQ.

In terms of assembly, nine homodimers form a cartwheel structure with an internal diameter of 23 nM and radial spokes connecting to the microtubule triplets.

The protein localises to the cytoplasm. It is found in the cytoskeleton. Its subcellular location is the microtubule organizing center. It localises to the centrosome. Central scaffolding component of the centrioles ensuring their 9-fold symmetry. Required for centrosome biogenesis and duplication: required both for mother-centriole-dependent centriole duplication and deuterosome-dependent centriole amplification in multiciliated cells. The chain is Spindle assembly abnormal protein 6 homolog (sass6) from Danio rerio (Zebrafish).